A 416-amino-acid chain; its full sequence is MDEADRRLLRRCRLRLVEELQVDQLWDALLSRELFRPHMIEDIQRAGSGSRRDQARQLIIDLETRGSQALPLFISCLEDTGQDMLASFLRTNRQAAKLSKPTLENLTPVVLRPEIRKPEVLRPETPRPVDIGSGGFGDVGALESLRGNADLAYILSMEPCGHCLIINNVNFCRESGLRTRTGSNIDCEKLRRRFSSLHFMVEVKGDLTAKKMVLALLELAQQDHGALDCCVVVILSHGCQASHLQFPGAVYGTDGCPVSVEKIVNIFNGTSCPSLGGKPKLFFIQACGGEQKDHGFEVASTSPEDESPGSNPEPDATPFQEGLRTFDQLDAISSLPTPSDIFVSYSTFPGFVSWRDPKSGSWYVETLDDIFEQWAHSEDLQSLLLRVANAVSVKGIYKQMPGCFNFLRKKLFFKTS.

Positions 1–92 (MDEADRRLLR…DMLASFLRTN (92 aa)) constitute a CARD domain. Thr-125 is subject to Phosphothreonine; by MAPK1. Residue Tyr-153 is modified to Phosphotyrosine; by ABL1. Active-site residues include His-237 and Cys-287. The disordered stretch occupies residues 294–320 (HGFEVASTSPEDESPGSNPEPDATPFQ). A phosphoserine mark is found at Ser-302, Ser-307, and Ser-310. Residues 316–330 (ATPFQEGLRTFDQLD) constitute a propeptide that is removed on maturation. Arg-355 bears the (Microbial infection) ADP-riboxanated arginine mark.

The protein belongs to the peptidase C14A family. As to quaternary structure, heterotetramer that consists of two anti-parallel arranged heterodimers, each one formed by a 35 kDa (p35) and a 10 kDa (p10) subunit. Caspase-9 and APAF1 bind to each other via their respective NH2-terminal CED-3 homologous domains in the presence of cytochrome C and ATP. Interacts (inactive form) with EFHD2. Interacts with HAX1. Interacts with BIRC2/c-IAP1, XIAP/BIRC4, BIRC5/survivin, BIRC6/bruce and BIRC7/livin. Interacts with ABL1 (via SH3 domain); the interaction is direct and increases in the response of cells to genotoxic stress and ABL1/c-Abl activation. Interacts with BCL2L10. Interacts with NleF from pathogenic E.coli. Post-translationally, cleavages at Asp-315 by granzyme B and at Asp-330 by caspase-3 generate the two active subunits. Caspase-8 and -10 can also be involved in these processing events. Phosphorylated at Thr-125 by MAPK1/ERK2. Phosphorylation at Thr-125 is sufficient to block caspase-9 processing and subsequent caspase-3 activation. Phosphorylation on Tyr-153 by ABL1/c-Abl; occurs in the response of cells to DNA damage. In terms of processing, (Microbial infection) ADP-riboxanation by C.violaceum CopC blocks CASP9 processing, preventing CASP9 activation and ability to mediate intrinsic apoptosis. Post-translationally, ubiquitinated by BIRC6; this activity is inhibited by DIABLO/SMAC. As to expression, ubiquitous, with highest expression in the heart, moderate expression in liver, skeletal muscle, and pancreas. Low levels in all other tissues. Within the heart, specifically expressed in myocytes.

It carries out the reaction Strict requirement for an Asp residue at position P1 and with a marked preference for His at position P2. It has a preferred cleavage sequence of Leu-Gly-His-Asp-|-Xaa.. Inhibited by the effector protein NleF that is produced by pathogenic E.coli; this inhibits apoptosis. Inhibited by BIRC6; following inhibition of BIRC6-caspase binding by DIABLO/SMAC, BIRC6 is subjected to caspase cleavage, leading to an increase in active caspases. Its function is as follows. Involved in the activation cascade of caspases responsible for apoptosis execution. Binding of caspase-9 to Apaf-1 leads to activation of the protease which then cleaves and activates effector caspases caspase-3 (CASP3) or caspase-7 (CASP7). Promotes DNA damage-induced apoptosis in a ABL1/c-Abl-dependent manner. Proteolytically cleaves poly(ADP-ribose) polymerase (PARP). Cleaves BIRC6 following inhibition of BIRC6-caspase binding by DIABLO/SMAC. Lacks activity is an dominant-negative inhibitor of caspase-9. This chain is Caspase-9 (CASP9), found in Homo sapiens (Human).